Reading from the N-terminus, the 95-residue chain is DNA-directed RNA polymerase subunit omega (95 aa).

The protein belongs to the RNA polymerase subunit omega family. In terms of assembly, the RNAP catalytic core consists of 2 alpha, 1 beta, 1 beta' and 1 omega subunit. When a sigma factor is associated with the core the holoenzyme is formed, which can initiate transcription.

The catalysed reaction is RNA(n) + a ribonucleoside 5'-triphosphate = RNA(n+1) + diphosphate. In terms of biological role, promotes RNA polymerase assembly. Latches the N- and C-terminal regions of the beta' subunit thereby facilitating its interaction with the beta and alpha subunits. The protein is DNA-directed RNA polymerase subunit omega of Colwellia psychrerythraea (strain 34H / ATCC BAA-681) (Vibrio psychroerythus).